The primary structure comprises 114 residues: Histone H3-7 (114 aa).

Residues 1–17 (NTGGKAPRKHIAHKQAK) show a composition bias toward basic residues. The interval 1 to 32 (NTGGKAPRKHIAHKQAKKSSAAAATGGVKKPH) is disordered. Low complexity predominate over residues 18–28 (KSSAAAATGGV).

The protein belongs to the histone H3 family. As to quaternary structure, the nucleosome is a histone octamer containing two molecules each of H2A, H2B, H3 and H4 assembled in one H3-H4 heterotetramer and two H2A-H2B heterodimers. The octamer wraps approximately 147 bp of DNA.

It localises to the nucleus. It is found in the chromosome. Its function is as follows. Core component of nucleosome. Nucleosomes wrap and compact DNA into chromatin, limiting DNA accessibility to the cellular machineries which require DNA as a template. Histones thereby play a central role in transcription regulation, DNA repair, DNA replication and chromosomal stability. DNA accessibility is regulated via a complex set of post-translational modifications of histones, also called histone code, and nucleosome remodeling. This Stylonychia lemnae (Ciliate) protein is Histone H3-7 (H3-7).